Reading from the N-terminus, the 191-residue chain is dTTP/UTP pyrophosphatase (191 aa).

Asp-71 acts as the Proton acceptor in catalysis.

The protein belongs to the Maf family. YhdE subfamily. A divalent metal cation serves as cofactor.

The protein resides in the cytoplasm. The enzyme catalyses dTTP + H2O = dTMP + diphosphate + H(+). The catalysed reaction is UTP + H2O = UMP + diphosphate + H(+). Nucleoside triphosphate pyrophosphatase that hydrolyzes dTTP and UTP. May have a dual role in cell division arrest and in preventing the incorporation of modified nucleotides into cellular nucleic acids. This chain is dTTP/UTP pyrophosphatase, found in Hyphomonas neptunium (strain ATCC 15444).